Consider the following 71-residue polypeptide: cAMP-dependent protein kinase inhibitor beta (71 aa).

The tract at residues 1–21 (MTDVESVISSFASSARAGRRN) is disordered. Position 2 is a blocked amino end (Thr) (Thr-2). Residue Ser-35 is modified to Phosphoserine. The tract at residues 51–71 (AKMKNEEKDQGQPKKPLDEDK) is disordered.

The protein belongs to the PKI family. Testis.

Functionally, extremely potent competitive inhibitor of cAMP-dependent protein kinase activity, this protein interacts with the catalytic subunit of the enzyme after the cAMP-induced dissociation of its regulatory chains. This chain is cAMP-dependent protein kinase inhibitor beta (Pkib), found in Rattus norvegicus (Rat).